A 92-amino-acid chain; its full sequence is Small ribosomal subunit protein uS17 (92 aa).

It belongs to the universal ribosomal protein uS17 family. As to quaternary structure, part of the 30S ribosomal subunit.

Functionally, one of the primary rRNA binding proteins, it binds specifically to the 5'-end of 16S ribosomal RNA. The chain is Small ribosomal subunit protein uS17 from Cupriavidus metallidurans (strain ATCC 43123 / DSM 2839 / NBRC 102507 / CH34) (Ralstonia metallidurans).